Reading from the N-terminus, the 483-residue chain is Malonate-semialdehyde dehydrogenase 2 (483 aa).

5 residues coordinate NAD(+): Phe152, Lys176, Glu179, Arg180, and Ser229. Cys284 serves as the catalytic Nucleophile. Glu384 provides a ligand contact to NAD(+).

It belongs to the aldehyde dehydrogenase family. IolA subfamily. As to quaternary structure, homotetramer.

The enzyme catalyses 3-oxopropanoate + NAD(+) + CoA + H2O = hydrogencarbonate + acetyl-CoA + NADH + H(+). The catalysed reaction is 2-methyl-3-oxopropanoate + NAD(+) + CoA + H2O = propanoyl-CoA + hydrogencarbonate + NADH + H(+). It functions in the pathway polyol metabolism; myo-inositol degradation into acetyl-CoA; acetyl-CoA from myo-inositol: step 7/7. Functionally, catalyzes the oxidation of malonate semialdehyde (MSA) and methylmalonate semialdehyde (MMSA) into acetyl-CoA and propanoyl-CoA, respectively. Is involved in a myo-inositol catabolic pathway. Bicarbonate, and not CO2, is the end-product of the enzymatic reaction. The sequence is that of Malonate-semialdehyde dehydrogenase 2 from Geobacillus thermodenitrificans (strain NG80-2).